Here is a 208-residue protein sequence, read N- to C-terminus: Small ribosomal subunit protein uS2 (208 aa).

Positions 189-208 (KPDQDLPVPPEEFETRLVQT) are disordered.

It belongs to the universal ribosomal protein uS2 family.

The sequence is that of Small ribosomal subunit protein uS2 from Pyrobaculum arsenaticum (strain DSM 13514 / JCM 11321 / PZ6).